Reading from the N-terminus, the 554-residue chain is Carboxylesterase 1C (554 aa).

Residues 1 to 18 form the signal peptide; the sequence is MWLHALVWASLAVCPILG. The N-linked (GlcNAc...) asparagine glycan is linked to N79. C87 and C116 are joined by a disulfide. S221 acts as the Acyl-ester intermediate in catalysis. Residues C273 and C284 are joined by a disulfide bond. N-linked (GlcNAc...) asparagine glycans are attached at residues N274 and N304. The active-site Charge relay system is E342. N377 is a glycosylation site (N-linked (GlcNAc...) asparagine). H455 serves as the catalytic Charge relay system. Residue S473 is modified to Phosphoserine. An N-linked (GlcNAc...) asparagine glycan is attached at N478. Residues 551–554 carry the Prevents secretion from ER motif; sequence TEHK.

The protein belongs to the type-B carboxylesterase/lipase family. In terms of tissue distribution, expressed in lung, kidney and liver.

It localises to the endoplasmic reticulum lumen. The catalysed reaction is a carboxylic ester + H2O = an alcohol + a carboxylate + H(+). Its function is as follows. Involved in the detoxification of xenobiotics and in the activation of ester and amide prodrugs. Involved in the extracellular metabolism of lung surfactant. The polypeptide is Carboxylesterase 1C (Ces1c) (Mus musculus (Mouse)).